The sequence spans 87 residues: Small ribosomal subunit protein uS17 (87 aa).

This sequence belongs to the universal ribosomal protein uS17 family. In terms of assembly, part of the 30S ribosomal subunit.

Functionally, one of the primary rRNA binding proteins, it binds specifically to the 5'-end of 16S ribosomal RNA. This chain is Small ribosomal subunit protein uS17, found in Neisseria meningitidis serogroup C (strain 053442).